Reading from the N-terminus, the 106-residue chain is NADH-quinone oxidoreductase subunit K (106 aa).

The next 3 membrane-spanning stretches (helical) occupy residues 9 to 29 (LGHYLAVAAVLLVLGIFGIFL), 35 to 55 (IVMLMSIELILLAVNLNMVAF), and 70 to 90 (FILTVAAAEAAIGLAILVIYF).

This sequence belongs to the complex I subunit 4L family. As to quaternary structure, NDH-1 is composed of 14 different subunits. Subunits NuoA, H, J, K, L, M, N constitute the membrane sector of the complex.

It localises to the cell inner membrane. It carries out the reaction a quinone + NADH + 5 H(+)(in) = a quinol + NAD(+) + 4 H(+)(out). Its function is as follows. NDH-1 shuttles electrons from NADH, via FMN and iron-sulfur (Fe-S) centers, to quinones in the respiratory chain. The immediate electron acceptor for the enzyme in this species is believed to be ubiquinone. Couples the redox reaction to proton translocation (for every two electrons transferred, four hydrogen ions are translocated across the cytoplasmic membrane), and thus conserves the redox energy in a proton gradient. This chain is NADH-quinone oxidoreductase subunit K, found in Granulibacter bethesdensis (strain ATCC BAA-1260 / CGDNIH1).